A 561-amino-acid chain; its full sequence is Nephronectin (561 aa).

An N-terminal signal peptide occupies residues 1–19 (MAVLLAAVLASSLYLQVAA). The region spanning 52–87 (SWGQCQPVCQPQCKHGECVGPNKCKCHPGFAGKTCN) is the EGF-like 1 domain. Disulfide bonds link Cys-56/Cys-69, Cys-60/Cys-75, Cys-77/Cys-86, Cys-93/Cys-104, Cys-100/Cys-113, and Cys-115/Cys-127. One can recognise an EGF-like 2; calcium-binding domain in the interval 89–128 (DLNECGLKPRPCKHRCMNTFGSYKCYCLNGYMLLPDGSCS). Positions 132-168 (SCSMANCQYGCDVVKGQVRCQCPSPGLQLAPDGRTCV) constitute an EGF-like 3 domain. The EGF-like 4; calcium-binding domain occupies 169–213 (DIDECATGRVSCPRFRQCVNTFGSYICKCHTGFDLMYIGGKYQCH). 6 disulfides stabilise this stretch: Cys-173-Cys-186, Cys-180-Cys-195, Cys-197-Cys-212, Cys-218-Cys-231, Cys-225-Cys-240, and Cys-242-Cys-253. Positions 214-254 (DIDECSLGQHQCSSYARCYNIHGSYKCQCRDGYEGDGLNCV) constitute an EGF-like 5; calcium-binding domain. The interval 266–370 (PIHMPERNGT…TSTTTRVITV (105 aa)) is disordered. The segment covering 307-316 (TNRPTSKPTT) has biased composition (low complexity). Over residues 317–348 (RPTPNPTPQPTPPPPPPLPTEPRTTPLPPTPE) the composition is skewed to pro residues. The segment covering 352-366 (TRPTTIAPATSTTTR) has biased composition (low complexity). The short motif at 382–384 (RGD) is the Integrin interaction element. One can recognise an MAM domain in the interval 420 to 561 (HSCNFDHGLC…DDVSLKRGRC (142 aa)).

This sequence belongs to the nephronectin family. As to quaternary structure, homodimer and homotrimer. In terms of tissue distribution, expressed in kidney (at protein level).

It is found in the secreted. It localises to the extracellular space. The protein resides in the extracellular matrix. Functional ligand of integrin alpha-8/beta-1 in kidney development. Regulates the expression of GDNF with integrin alpha-8/beta-1 which is essential for kidney development. May also play a role in the development and function of various tissues, regulating cell adhesion, spreading and survival through the binding of several integrins. This Mus musculus (Mouse) protein is Nephronectin (Npnt).